Reading from the N-terminus, the 257-residue chain is Enterotoxin type A (257 aa).

Residues 1–24 (MKKTAFTLLLFIALTLTTSPLVNG) form the signal peptide. Cysteines 120 and 130 form a disulfide. Residues His-211, His-249, and Asp-251 each contribute to the Zn(2+) site.

It belongs to the staphylococcal/streptococcal toxin family. Monomer. Interacts with MHC class II molecules alpha/HLA-DRB1 and beta/HLA-DRA chains. The interaction with MHC-II molecules occurs at both zinc-dependent and zinc-independent sites. Interacts with T-cell receptor beta variable 7-9/TRBV7-9. It depends on Zn(2+) as a cofactor.

Its subcellular location is the secreted. Functionally, staphylococcal enterotoxin that activates the host immune system by binding as unprocessed molecules to major histocompatibility (MHC) complex class II and T-cell receptor (TCR) molecules. In turn, waves of cellular activation, cytokine production, and migration into the lung tissue and airways occur via alphabeta T-cells. Also causes the intoxication staphylococcal food poisoning syndrome. The illness is characterized by high fever, hypotension, diarrhea, shock, and in some cases death. In Staphylococcus aureus, this protein is Enterotoxin type A (entA).